The sequence spans 732 residues: Catalase-peroxidase (732 aa).

Positions 97 to 220 (WHSAGTYRTG…LAAVQMGLIY (124 aa)) form a cross-link, tryptophyl-tyrosyl-methioninium (Trp-Tyr) (with M-246). Histidine 98 (proton acceptor) is an active-site residue. The tryptophyl-tyrosyl-methioninium (Tyr-Met) (with W-97) cross-link spans 220–246 (YVNPEGPDGKPDPVAAGKDIRETFGRM). Residue histidine 261 coordinates heme b.

The protein belongs to the peroxidase family. Peroxidase/catalase subfamily. Homodimer or homotetramer. It depends on heme b as a cofactor. Formation of the three residue Trp-Tyr-Met cross-link is important for the catalase, but not the peroxidase activity of the enzyme.

The catalysed reaction is H2O2 + AH2 = A + 2 H2O. It carries out the reaction 2 H2O2 = O2 + 2 H2O. Its function is as follows. Bifunctional enzyme with both catalase and broad-spectrum peroxidase activity. The polypeptide is Catalase-peroxidase (Chlorobium phaeobacteroides (strain BS1)).